A 72-amino-acid polypeptide reads, in one-letter code: Translation initiation factor IF-1 (72 aa).

The S1-like domain occupies 1–72; the sequence is MAKEDVIEMQ…SKGRIVFRAR (72 aa).

It belongs to the IF-1 family. In terms of assembly, component of the 30S ribosomal translation pre-initiation complex which assembles on the 30S ribosome in the order IF-2 and IF-3, IF-1 and N-formylmethionyl-tRNA(fMet); mRNA recruitment can occur at any time during PIC assembly.

The protein localises to the cytoplasm. Its function is as follows. One of the essential components for the initiation of protein synthesis. Stabilizes the binding of IF-2 and IF-3 on the 30S subunit to which N-formylmethionyl-tRNA(fMet) subsequently binds. Helps modulate mRNA selection, yielding the 30S pre-initiation complex (PIC). Upon addition of the 50S ribosomal subunit IF-1, IF-2 and IF-3 are released leaving the mature 70S translation initiation complex. This chain is Translation initiation factor IF-1, found in Pseudoalteromonas translucida (strain TAC 125).